The following is a 274-amino-acid chain: Lipoprotein E (274 aa).

The signal sequence occupies residues M1–G20. Residue C21 is the site of N-palmitoyl cysteine attachment. A lipid anchor (S-diacylglycerol cysteine) is attached at C21.

It is found in the cell outer membrane. The sequence is that of Lipoprotein E (hel) from Haemophilus influenzae (strain ATCC 51907 / DSM 11121 / KW20 / Rd).